Consider the following 181-residue polypeptide: Large ribosomal subunit protein uL5 (181 aa).

Belongs to the universal ribosomal protein uL5 family. In terms of assembly, part of the 50S ribosomal subunit; part of the 5S rRNA/L5/L18/L25 subcomplex. Contacts the 5S rRNA and the P site tRNA. Forms a bridge to the 30S subunit in the 70S ribosome.

This is one of the proteins that bind and probably mediate the attachment of the 5S RNA into the large ribosomal subunit, where it forms part of the central protuberance. In the 70S ribosome it contacts protein S13 of the 30S subunit (bridge B1b), connecting the 2 subunits; this bridge is implicated in subunit movement. Contacts the P site tRNA; the 5S rRNA and some of its associated proteins might help stabilize positioning of ribosome-bound tRNAs. The chain is Large ribosomal subunit protein uL5 from Baumannia cicadellinicola subsp. Homalodisca coagulata.